Here is a 393-residue protein sequence, read N- to C-terminus: Serpin-Z4 (393 aa).

Residues 342-366 (GTEAAAVSVASMTKDMLLMGDFVAD) form an RCL region.

It belongs to the serpin family.

In terms of biological role, probable serine protease inhibitor. The polypeptide is Serpin-Z4 (Arabidopsis thaliana (Mouse-ear cress)).